The chain runs to 217 residues: ITG-like peptide (217 aa).

The signal sequence occupies residues 1 to 21; it reads MHRTMAVTAVLVLSAAGAAHA. A propeptide spanning residues 22–208 is cleaved from the precursor; the sequence is WGGLFNRFSS…REFVQHTAGE (187 aa).

As to expression, ITG-like peptide: Expressed in corpora cardiaca (CC), corpora allata (CA), antennal lobe (AL) and gnathal ganglion (GNG) (at protein level). Expression in AL detected in all animals, expression in GNG detected in most animals and in CA and CC detected in few animals (at protein level).

It is found in the secreted. The chain is ITG-like peptide from Agrotis ipsilon (Black cutworm moth).